Reading from the N-terminus, the 270-residue chain is GTP cyclohydrolase FolE2 2 (270 aa).

It belongs to the GTP cyclohydrolase IV family.

It catalyses the reaction GTP + H2O = 7,8-dihydroneopterin 3'-triphosphate + formate + H(+). The protein operates within cofactor biosynthesis; 7,8-dihydroneopterin triphosphate biosynthesis; 7,8-dihydroneopterin triphosphate from GTP: step 1/1. Its function is as follows. Converts GTP to 7,8-dihydroneopterin triphosphate. The protein is GTP cyclohydrolase FolE2 2 of Dechloromonas aromatica (strain RCB).